Here is a 297-residue protein sequence, read N- to C-terminus: GTPase Era (297 aa).

The region spanning 7–174 (RSGFVSIIGR…VEVVHGFIPA (168 aa)) is the Era-type G domain. The G1 stretch occupies residues 15-22 (GRPNVGKS). 15 to 22 (GRPNVGKS) serves as a coordination point for GTP. Residues 41 to 45 (QTTRN) form a G2 region. The tract at residues 62-65 (DTPG) is G3. GTP contacts are provided by residues 62–66 (DTPGI) and 124–127 (NKID). Positions 124-127 (NKID) are G4. The G5 stretch occupies residues 153 to 155 (VSA). A KH type-2 domain is found at 205–282 (THDEVPYSVA…FLELFVRVSK (78 aa)).

Belongs to the TRAFAC class TrmE-Era-EngA-EngB-Septin-like GTPase superfamily. Era GTPase family. Monomer.

It is found in the cytoplasm. The protein resides in the cell inner membrane. An essential GTPase that binds both GDP and GTP, with rapid nucleotide exchange. Plays a role in 16S rRNA processing and 30S ribosomal subunit biogenesis and possibly also in cell cycle regulation and energy metabolism. In Geotalea uraniireducens (strain Rf4) (Geobacter uraniireducens), this protein is GTPase Era.